The chain runs to 1305 residues: Contactin-associated protein like 5-3 (1305 aa).

The signal sequence occupies residues 1-24 (MDSVPRLNSVFTLVLSGLWHFGLT). Positions 25–174 (ATNYNCDDPL…IGMRVEVYGC (150 aa)) constitute an F5/8 type C domain. Residues 25–1235 (ATNYNCDDPL…EPLTNAVPSD (1211 aa)) lie on the Extracellular side of the membrane. 2 Laminin G-like domains span residues 180–360 (VADF…TFSC) and 367–544 (PITF…IDLC). N-linked (GlcNAc...) asparagine glycosylation occurs at asparagine 282. Residues cysteine 329 and cysteine 360 are joined by a disulfide bond. Asparagine 496 carries N-linked (GlcNAc...) asparagine glycosylation. 3 disulfide bridges follow: cysteine 512–cysteine 544, cysteine 550–cysteine 561, and cysteine 555–cysteine 570. One can recognise an EGF-like 1 domain in the interval 546-583 (IKDRCLPNYCEHGGQCAQTWTNFYCNCSDTGYTGATCH). A glycan (N-linked (GlcNAc...) asparagine) is linked at asparagine 571. Cysteines 572 and 582 form a disulfide. Residues 584–790 (DSIYEQSCEV…LRCYGDRHFW (207 aa)) enclose the Fibrinogen C-terminal domain. The region spanning 791-956 (NAVSFSTEAS…KVTSGVRPGC (166 aa)) is the Laminin G-like 3 domain. 4 disulfides stabilise this stretch: cysteine 929-cysteine 956, cysteine 960-cysteine 973, cysteine 967-cysteine 982, and cysteine 984-cysteine 994. The 39-residue stretch at 957–995 (PGHCSSYGRNCQNGGKCVEKHIGYSCDCTNSPYEGPFCQ) folds into the EGF-like 2 domain. One can recognise a Laminin G-like 4 domain in the interval 1013–1198 (QEPYSVTKNT…VQRTLTESSC (186 aa)). N-linked (GlcNAc...) asparagine glycosylation is found at asparagine 1023 and asparagine 1057. A disulfide bridge connects residues cysteine 1163 and cysteine 1198. A helical transmembrane segment spans residues 1236 to 1256 (LAVIGGIIAVVTFISFSVIGI). Topologically, residues 1257-1305 (MTHFFYQHKRSHYASQMKEKEYPENVDSSSRNDIDLQNTTRECKQEDFI) are cytoplasmic.

Belongs to the neurexin family. In terms of tissue distribution, expressed in brain.

It localises to the membrane. May play a role in the correct development and proper functioning of the peripheral and central nervous system and be involved in cell adhesion and intercellular communication. The polypeptide is Contactin-associated protein like 5-3 (Cntnap5c) (Mus musculus (Mouse)).